Here is a 993-residue protein sequence, read N- to C-terminus: Glycogen phosphorylase 2 (993 aa).

Residues 1–82 form a disordered region; sequence MEEKRSTNSP…SNQSEDPATQ (82 aa). Positions 19 to 48 are enriched in polar residues; that stretch reads RSGSITSATSHPPRSNSNPKLVAKHQQQLY. Residues 58-77 are compositionally biased toward low complexity; it reads EQQNQQPQQQQQKQTSNQSE. K763 bears the N6-(pyridoxal phosphate)lysine mark. Polar residues predominate over residues 962–981; sequence VISGGDKTNNTLKPKQTTKG. The disordered stretch occupies residues 962–993; the sequence is VISGGDKTNNTLKPKQTTKGFNIGGQPGNPTN. The segment covering 983–993 has biased composition (gly residues); the sequence is NIGGQPGNPTN.

The protein belongs to the glycogen phosphorylase family. In terms of assembly, homodimer. Pyridoxal 5'-phosphate serves as cofactor. In terms of processing, the N-terminus is blocked. Post-translationally, enzyme activity requires processing of the 113 kDa peptide to an enzymatically active 106 kDa form of the protein. Processing would occur near the middle of the Gln-rich repetitive element.

It catalyses the reaction [(1-&gt;4)-alpha-D-glucosyl](n) + phosphate = [(1-&gt;4)-alpha-D-glucosyl](n-1) + alpha-D-glucose 1-phosphate. Phosphorylase is an important allosteric enzyme in carbohydrate metabolism. Enzymes from different sources differ in their regulatory mechanisms and in their natural substrates. However, all known phosphorylases share catalytic and structural properties. The sequence is that of Glycogen phosphorylase 2 (glpD) from Dictyostelium discoideum (Social amoeba).